Here is a 929-residue protein sequence, read N- to C-terminus: SCY1-like protein 2 (929 aa).

The Protein kinase domain occupies 32-327 (FDVGRHIASG…ADQMTKIPFF (296 aa)). Residues 443 to 479 (DEIKNSVLPMVYRALEAPSIQIQELCLNIIPTFANLI) form an HEAT repeat. Residues 661–701 (ESENKEDGLQNKHKRASLTLEEKQKLAKEQEQAQKLKSQQP) are a coiled coil. Serine 677 bears the Phosphoserine mark. Positions 684 to 694 (QKLAKEQEQAQ) are enriched in basic and acidic residues. Disordered regions lie at residues 684–709 (QKLA…VHTP) and 906–929 (NFAQ…DLFG). Over residues 695 to 705 (KLKSQQPLKPQ) the composition is skewed to low complexity. A necessary for interaction with AP2 complex and clathrin, interaction with clathrin is necessary for its targeting to the TGN and endosomal membranes region spans residues 699–929 (QQPLKPQVHT…ASNDLKDLFG (231 aa)). Residue threonine 708 is modified to Phosphothreonine. Over residues 912 to 922 (TTMTNSSSASN) the composition is skewed to polar residues.

This sequence belongs to the protein kinase superfamily. In terms of assembly, interacts with clathrin and AP2B1; the interaction mediates the association with the AP-2 complex. Post-translationally, could autophosphorylate in presence of poly-L-lysine.

It is found in the cytoplasmic vesicle. The protein resides in the clathrin-coated vesicle. Its subcellular location is the golgi apparatus. The protein localises to the trans-Golgi network membrane. It localises to the endosome membrane. In terms of biological role, component of the AP2-containing clathrin coat that may regulate clathrin-dependent trafficking at plasma membrane, TGN and endosomal system. A possible serine/threonine-protein kinase toward the beta2-subunit of the plasma membrane adapter complex AP2 and other proteins in presence of poly-L-lysine has not been confirmed. By regulating the expression of excitatory receptors at synapses, plays an essential role in neuronal function and signaling and in brain development. The protein is SCY1-like protein 2 of Homo sapiens (Human).